The primary structure comprises 585 residues: Protein NRT1/ PTR FAMILY 4.6 (585 aa).

The next 12 membrane-spanning stretches (helical) occupy residues 28-48 (GMLA…AYLA), 75-95 (FMGT…AFFS), 96-116 (TFQI…ILTI), 142-162 (AMLF…KGSL), 184-204 (FFNY…TFVV), 211-231 (GWEW…LIFL), 343-363 (IVLK…CLAQ), 391-411 (IFPV…IIPF), 428-448 (IGVG…VEIK), 465-485 (LPVT…ADLF), 508-528 (SLSW…VSIV), and 554-574 (FYWL…FWAM).

The protein belongs to the major facilitator superfamily. Proton-dependent oligopeptide transporter (POT/PTR) (TC 2.A.17) family. Expressed in root hairs and in epidermis of both root tips and mature regions of roots. Detected in shoots, stems, flowers, siliques and imbibed seeds. Expressed in vascular tissues in cotyledons, trus leaves, hypocotyls, roots and inflorescence stems.

The protein localises to the cell membrane. In terms of biological role, low-affinity proton-dependent nitrate transporter. Involved in constitutive nitrate uptake. Not involved in histidine or dipeptides transport. Involved in (+)-abscisic acid (ABA) transport, but not in gibberellin, indole-3-acetic acid or jasmonic acid import. Mediates cellular ABA uptake. Nitrate does not compete with abscisic acid as a substrate of NPF4.6. This chain is Protein NRT1/ PTR FAMILY 4.6 (NPF4.6), found in Arabidopsis thaliana (Mouse-ear cress).